A 351-amino-acid polypeptide reads, in one-letter code: Caveolin-2 (351 aa).

Over residues 1 to 14 (MTRQNTSESDNTQR) the composition is skewed to polar residues. Disordered stretches follow at residues 1–55 (MTRQ…QGIA), 71–93 (HRTS…YDNL), and 144–193 (QKGS…PEME). Topologically, residues 1-261 (MTRQNTSESD…FEIVRIYSYK (261 aa)) are cytoplasmic. Over residues 22-31 (TVDDIDELTD) the composition is skewed to acidic residues. Basic residues predominate over residues 38–51 (HHHHHHHHEHHHQH). A compositionally biased stretch (low complexity) spans 167-184 (PAQQSAPPTQQSRPQTTS). Residues 262 to 290 (ILTLIFGLIIAFLGGILFALFAFLNIWIF) constitute an intramembrane region (helical). The Cytoplasmic portion of the chain corresponds to 291–351 (RPILILTRMA…EVWEKHIHHV (61 aa)).

Belongs to the caveolin family. In terms of assembly, homooligomer. In terms of tissue distribution, expressed in intracellular bodies in intestinal cells.

It localises to the golgi apparatus membrane. Its subcellular location is the cell membrane. The protein resides in the membrane. It is found in the caveola. The protein localises to the apical cell membrane. Functionally, may act as a scaffolding protein within caveolar membranes. Interacts directly with G-protein alpha subunits and can regulate their activity. Thought to have a role in the uptake of lipids and proteins in the intestinal cells; operates in the apical uptake of lipid markers and trafficking of yolk proteins. Affects fecundity and egg laying. The protein is Caveolin-2 (cav-2) of Caenorhabditis elegans.